Reading from the N-terminus, the 206-residue chain is uncharacterized protein (206 aa).

Positions 128 to 206 are disordered; the sequence is KRYNVQKPKV…DQSWLDELLR (79 aa). Polar residues predominate over residues 171-181; sequence YISSNHSSMHI.

It localises to the cytoplasm. The protein resides in the nucleus. This is an uncharacterized protein from Schizosaccharomyces pombe (strain 972 / ATCC 24843) (Fission yeast).